We begin with the raw amino-acid sequence, 124 residues long: Acidic phospholipase A2 A (124 aa).

7 disulfides stabilise this stretch: Cys-26-Cys-116, Cys-28-Cys-44, Cys-43-Cys-95, Cys-49-Cys-124, Cys-50-Cys-88, Cys-57-Cys-81, and Cys-75-Cys-86. Tyr-27, Gly-29, and Gly-31 together coordinate Ca(2+). His-47 is an active-site residue. Residue Asp-48 participates in Ca(2+) binding. Asp-89 is an active-site residue.

Belongs to the phospholipase A2 family. Group II subfamily. D49 sub-subfamily. Requires Ca(2+) as cofactor. As to expression, expressed by the venom gland.

It localises to the secreted. It catalyses the reaction a 1,2-diacyl-sn-glycero-3-phosphocholine + H2O = a 1-acyl-sn-glycero-3-phosphocholine + a fatty acid + H(+). In terms of biological role, PLA2 catalyzes the calcium-dependent hydrolysis of the 2-acyl groups in 3-sn-phosphoglycerides. The sequence is that of Acidic phospholipase A2 A from Gloydius halys (Chinese water mocassin).